The primary structure comprises 509 residues: ATP synthase subunit alpha (509 aa).

169 to 176 (GDRQTGKT) is an ATP binding site.

Belongs to the ATPase alpha/beta chains family. As to quaternary structure, F-type ATPases have 2 components, CF(1) - the catalytic core - and CF(0) - the membrane proton channel. CF(1) has five subunits: alpha(3), beta(3), gamma(1), delta(1), epsilon(1). CF(0) has four main subunits: a(1), b(1), b'(1) and c(9-12).

It localises to the cell inner membrane. It catalyses the reaction ATP + H2O + 4 H(+)(in) = ADP + phosphate + 5 H(+)(out). Functionally, produces ATP from ADP in the presence of a proton gradient across the membrane. The alpha chain is a regulatory subunit. The sequence is that of ATP synthase subunit alpha from Erythrobacter litoralis (strain HTCC2594).